We begin with the raw amino-acid sequence, 773 residues long: C-Maf-inducing protein (773 aa).

The tract at residues methionine 1–proline 30 is disordered. Positions leucine 54–tyrosine 163 constitute a PH domain. A phosphoserine mark is found at serine 349, serine 377, serine 382, and serine 660. 4 LRR repeats span residues asparagine 663–proline 686, serine 687–serine 707, methionine 712–serine 732, and serine 736–lysine 756.

Interacts with FLNA. Isoform 1 is expressed in peripheral blood mononuclear cells and kidney. Lower expression in brain and liver. Expression is down-regulated in activated cells. Isoform 2 is expressed in lymphocyte precursors, however, expression shuts down during maturation and differentiation in thymus and fetal liver.

It localises to the nucleus. The protein localises to the cytoplasm. Plays a role in T-cell signaling pathway. Isoform 2 may play a role in T-helper 2 (Th2) signaling pathway and seems to represent the first proximal signaling protein that links T-cell receptor-mediated signal to the activation of c-Maf Th2 specific factor. This chain is C-Maf-inducing protein (CMIP), found in Homo sapiens (Human).